Here is a 395-residue protein sequence, read N- to C-terminus: S-adenosylmethionine synthase 5 (395 aa).

Glutamate 10 contributes to the Mg(2+) binding site. Residue histidine 16 participates in ATP binding. Glutamate 44 provides a ligand contact to K(+). L-methionine-binding residues include glutamate 57 and glutamine 100. ATP contacts are provided by residues 168–170 (DGK), 236–239 (SGRF), aspartate 247, 253–254 (RK), alanine 270, lysine 274, and lysine 278. Aspartate 247 lines the L-methionine pocket. Lysine 278 contacts L-methionine.

This sequence belongs to the AdoMet synthase family. In terms of assembly, homotetramer. Mn(2+) serves as cofactor. The cofactor is Mg(2+). Co(2+) is required as a cofactor. It depends on K(+) as a cofactor.

Its subcellular location is the cytoplasm. It catalyses the reaction L-methionine + ATP + H2O = S-adenosyl-L-methionine + phosphate + diphosphate. It functions in the pathway amino-acid biosynthesis; S-adenosyl-L-methionine biosynthesis; S-adenosyl-L-methionine from L-methionine: step 1/1. Catalyzes the formation of S-adenosylmethionine from methionine and ATP. The reaction comprises two steps that are both catalyzed by the same enzyme: formation of S-adenosylmethionine (AdoMet) and triphosphate, and subsequent hydrolysis of the triphosphate. This chain is S-adenosylmethionine synthase 5 (METK5), found in Populus trichocarpa (Western balsam poplar).